Consider the following 187-residue polypeptide: Sodium/potassium ATPase inhibitor SPAI-2 (187 aa).

The first 21 residues, 1 to 21 (MRSRSFLVLVAVFLICETLVA), serve as a signal peptide directing secretion. Glutamine 22 bears the Pyrrolidone carboxylic acid mark. Positions 22–126 (QRLDRIRGPK…NAQLPDKVQD (105 aa)) are excised as a propeptide. The segment at 28-98 (RGPKGQGQDP…QDPVKAELPD (71 aa)) is disordered. 14 consecutive repeat copies span residues 34–39 (GQDPVE), 40–45 (GQDQDE), 46–51 (GPGPVK), 58–63 (GQDPVK), 64–69 (GQDPVK), 70–75 (GQDPVK), 76–81 (GQDPVK), 82–87 (GQDLVK), 88–93 (SQDPVK), 100–105 (GQDVVK), 106–111 (GHEPVE), 112–117 (GQDPVN), 118–123 (AQLPDK), and 124–129 (VQDPVK). Positions 34–129 (GQDPVEGQDQ…LPDKVQDPVK (96 aa)) are 14 X 6 AA approximate tandem repeats. Residues 64–85 (GQDPVKGQDPVKGQDPVKGQDL) form an SVP-1 clotting 1 repeat. The WAP domain maps to 139–187 (LLSKRGHCPRILFRCPLSNPSNKCWRDYDCPGVKKCCEGFCGKDCLYPK). Disulfide bonds link cysteine 146/cysteine 175, cysteine 153/cysteine 179, cysteine 162/cysteine 174, and cysteine 168/cysteine 183.

The short form (AA 127-187) may be an artifact due to the strongly acidic conditions of the duodenum. The pro-SPAI form may be the native form. In terms of tissue distribution, small intestine &gt; large intestine. The plasma contains the pro-SPAI form circulating.

Functionally, inhibits Na(+),K(+) ATPase by the competitive mode against Na(+). This is Sodium/potassium ATPase inhibitor SPAI-2 from Sus scrofa (Pig).